The following is a 450-amino-acid chain: Glycerol dehydrogenase 1 (450 aa).

NAD(+) is bound by residues Asp-99, 155–159, and 177–180; these read GKTMD and TTAS. Asp-182 lines the substrate pocket. Residues Ser-186, Leu-188, and Tyr-192 each contribute to the NAD(+) site. Residues Asp-232, His-315, and His-333 each contribute to the substrate site. 3 residues coordinate Zn(2+): Asp-232, His-315, and His-333.

Belongs to the iron-containing alcohol dehydrogenase family. Zn(2+) is required as a cofactor.

Its subcellular location is the mitochondrion. It catalyses the reaction glycerol + NAD(+) = dihydroxyacetone + NADH + H(+). Its pathway is polyol metabolism; glycerol fermentation; glycerone phosphate from glycerol (oxidative route): step 1/2. Functionally, glycerol dehydrogenase involved in the assimilation of glycerol. The protein is Glycerol dehydrogenase 1 (gld1) of Schizosaccharomyces pombe (strain 972 / ATCC 24843) (Fission yeast).